The following is a 449-amino-acid chain: Glutamate--tRNA ligase 1 (449 aa).

The short motif at 11-21 (PSPTGSLHVGN) is the 'HIGH' region element. The short motif at 242 to 246 (PLSKR) is the 'KMSKS' region element. Residue lysine 245 participates in ATP binding.

Belongs to the class-I aminoacyl-tRNA synthetase family. Glutamate--tRNA ligase type 1 subfamily. Monomer.

It localises to the cytoplasm. It carries out the reaction tRNA(Glu) + L-glutamate + ATP = L-glutamyl-tRNA(Glu) + AMP + diphosphate. Its function is as follows. Catalyzes the attachment of glutamate to tRNA(Glu) in a two-step reaction: glutamate is first activated by ATP to form Glu-AMP and then transferred to the acceptor end of tRNA(Glu). The chain is Glutamate--tRNA ligase 1 from Parvibaculum lavamentivorans (strain DS-1 / DSM 13023 / NCIMB 13966).